The sequence spans 329 residues: Replication factor C small subunit 1 (329 aa).

44–51 (GPPGTGKT) lines the ATP pocket.

This sequence belongs to the activator 1 small subunits family. RfcS subfamily. Heteromultimer composed of small subunits (RfcS) and large subunits (RfcL).

Part of the RFC clamp loader complex which loads the PCNA sliding clamp onto DNA. The chain is Replication factor C small subunit 1 from Pyrobaculum aerophilum (strain ATCC 51768 / DSM 7523 / JCM 9630 / CIP 104966 / NBRC 100827 / IM2).